We begin with the raw amino-acid sequence, 643 residues long: Phosphomethylpyrimidine synthase (643 aa).

Residues asparagine 248, methionine 277, tyrosine 306, histidine 342, 362–364 (SRG), 403–406 (DGLR), and glutamate 442 each bind substrate. Histidine 446 contributes to the Zn(2+) binding site. Tyrosine 469 contributes to the substrate binding site. Histidine 510 provides a ligand contact to Zn(2+). [4Fe-4S] cluster is bound by residues cysteine 590, cysteine 593, and cysteine 598.

It belongs to the ThiC family. Homodimer. The cofactor is [4Fe-4S] cluster.

It catalyses the reaction 5-amino-1-(5-phospho-beta-D-ribosyl)imidazole + S-adenosyl-L-methionine = 4-amino-2-methyl-5-(phosphooxymethyl)pyrimidine + CO + 5'-deoxyadenosine + formate + L-methionine + 3 H(+). It functions in the pathway cofactor biosynthesis; thiamine diphosphate biosynthesis. Its function is as follows. Catalyzes the synthesis of the hydroxymethylpyrimidine phosphate (HMP-P) moiety of thiamine from aminoimidazole ribotide (AIR) in a radical S-adenosyl-L-methionine (SAM)-dependent reaction. The protein is Phosphomethylpyrimidine synthase of Burkholderia lata (strain ATCC 17760 / DSM 23089 / LMG 22485 / NCIMB 9086 / R18194 / 383).